The primary structure comprises 329 residues: uncharacterized protein (329 aa).

The region spanning I38 to F184 is the SIS domain. G56–A61 provides a ligand contact to ATP. CBS domains lie at Q211–L267 and T276–A329.

The protein belongs to the SIS family. GutQ/KpsF subfamily.

This is an uncharacterized protein from Helicobacter pylori (strain J99 / ATCC 700824) (Campylobacter pylori J99).